The following is a 429-amino-acid chain: Enolase (429 aa).

Glutamine 162 is a (2R)-2-phosphoglycerate binding site. The active-site Proton donor is the glutamate 204. 3 residues coordinate Mg(2+): aspartate 241, glutamate 283, and aspartate 310. Residues lysine 335, arginine 364, serine 365, and lysine 386 each coordinate (2R)-2-phosphoglycerate. Catalysis depends on lysine 335, which acts as the Proton acceptor.

This sequence belongs to the enolase family. Requires Mg(2+) as cofactor.

The protein resides in the cytoplasm. The protein localises to the secreted. It localises to the cell surface. The enzyme catalyses (2R)-2-phosphoglycerate = phosphoenolpyruvate + H2O. It participates in carbohydrate degradation; glycolysis; pyruvate from D-glyceraldehyde 3-phosphate: step 4/5. Functionally, catalyzes the reversible conversion of 2-phosphoglycerate (2-PG) into phosphoenolpyruvate (PEP). It is essential for the degradation of carbohydrates via glycolysis. The sequence is that of Enolase from Mycobacterium sp. (strain JLS).